The following is a 349-amino-acid chain: tRNA pseudouridine synthase D (349 aa).

Residue F27 coordinates substrate. Residue D80 is the Nucleophile of the active site. N129 contributes to the substrate binding site. A TRUD domain is found at 155–303; the sequence is GVPNYFGAQR…VEASRRAMLL (149 aa). F329 provides a ligand contact to substrate.

The protein belongs to the pseudouridine synthase TruD family.

It carries out the reaction uridine(13) in tRNA = pseudouridine(13) in tRNA. Responsible for synthesis of pseudouridine from uracil-13 in transfer RNAs. This is tRNA pseudouridine synthase D from Salmonella typhi.